The sequence spans 61 residues: UPF0181 protein Ent638_2380 (61 aa).

It belongs to the UPF0181 family.

This chain is UPF0181 protein Ent638_2380, found in Enterobacter sp. (strain 638).